Reading from the N-terminus, the 629-residue chain is MVAPQRRTVMPALGLLASSLCSLLLTANAATVEQHWNINWVPDVNPDGLYPRHVIGVNGSWPPPIINVNASDTVRITATNKLETGVGASLHSHGMFFNRTGYYDGAVAITQCPIPPGQSFTYETLNSPASPADRRKQMGTFWIHAHNNDQYTDGLRSPVIIHPDDPADIHYNYDDDYTVILGDWYHSNYTDLVKNEFMNRKNPTGAEPVPKSGLIYFAHTSNKTSAATYLPGFSENATLPFEAGKTYRLRVINMSALAAFYFYLSGHDMQVIEVEGVDVLPQPVDFLSVAVAQRFSVLVTARNDTDPQNWKLHANMDEDMFDVVPEDLQLNVSATISYPNAPKDKFGPEKILEEYTYFDDLQFVPVNAEPMVTPDAVHRLDVSFDTMSDGENYAAFNNISYVAPQVPALFSAESMGALASNPAIYGPNSNAFVIKHNEMIEVQLFNWDAGKHPFHLHGHHFQVVHKSQDVTSDDPTINPPFNSSQVNPMRRDTVMVPPGGSAYLRFRADNPGAWFFHCHIDPHLVSGLASIFIEAPDVLSDSFLNVPSYIKNQCQAQGIATTGNAVGLNSTSDFDGLAKGPTYLESGWTGRAIAAFTGCIITGLLGLATVVVYGWHSGEEDDDEEEEDK.

Positions 1 to 29 (MVAPQRRTVMPALGLLASSLCSLLLTANA) are cleaved as a signal peptide. Plastocyanin-like domains are found at residues 44–164 (VNPD…IHPD) and 175–338 (DDYT…TISY). N-linked (GlcNAc...) asparagine glycosylation is found at N58 and N69. Residues H91 and H93 each coordinate Cu cation. An N-linked (GlcNAc...) asparagine glycan is attached at N98. Residues H144 and H146 each contribute to the Cu cation site. Residues N188, N222, N236, N253, N303, N331, and N398 are each glycosylated (N-linked (GlcNAc...) asparagine). One can recognise a Plastocyanin-like 3 domain in the interval 401 to 537 (YVAPQVPALF…LASIFIEAPD (137 aa)). Residues H452, H455, and H457 each contribute to the Cu cation site. N482 carries an N-linked (GlcNAc...) asparagine glycan. H517, C518, H519, and H523 together coordinate Cu cation. An N-linked (GlcNAc...) asparagine glycan is attached at N569. Residues 592–612 (AIAAFTGCIITGLLGLATVVV) traverse the membrane as a helical segment.

This sequence belongs to the multicopper oxidase family. Requires Cu cation as cofactor.

The protein localises to the cell membrane. Its function is as follows. Iron transport multicopper oxidase, which is required for Fe(2+) high affinity uptake. May be required to oxidize Fe(2+) and release it from the transporter. Essential component of copper-dependent iron transport. In Mycosarcoma maydis (Corn smut fungus), this protein is Iron multicopper oxidase fer1.